A 526-amino-acid polypeptide reads, in one-letter code: Probable Xaa-Pro aminopeptidase MGG_05684 (526 aa).

Positions 285, 296, 447, and 488 each coordinate Mn(2+).

The protein belongs to the peptidase M24B family. It depends on Mn(2+) as a cofactor.

The enzyme catalyses Release of any N-terminal amino acid, including proline, that is linked to proline, even from a dipeptide or tripeptide.. Its function is as follows. Catalyzes the removal of a penultimate prolyl residue from the N-termini of peptides. The protein is Probable Xaa-Pro aminopeptidase MGG_05684 of Pyricularia oryzae (strain 70-15 / ATCC MYA-4617 / FGSC 8958) (Rice blast fungus).